Consider the following 564-residue polypeptide: Arginine--tRNA ligase (564 aa).

Residues 130 to 140 carry the 'HIGH' region motif; that stretch reads ANPTGSLHIGH.

The protein belongs to the class-I aminoacyl-tRNA synthetase family. As to quaternary structure, monomer.

The protein resides in the cytoplasm. It catalyses the reaction tRNA(Arg) + L-arginine + ATP = L-arginyl-tRNA(Arg) + AMP + diphosphate. The protein is Arginine--tRNA ligase of Malacoplasma penetrans (strain HF-2) (Mycoplasma penetrans).